Here is an 86-residue protein sequence, read N- to C-terminus: YcgL domain-containing protein XCC3997 (86 aa).

The YcgL domain occupies 1 to 83 (MHAYVYKSQR…PKTVVLAGEC (83 aa)).

This is YcgL domain-containing protein XCC3997 from Xanthomonas campestris pv. campestris (strain ATCC 33913 / DSM 3586 / NCPPB 528 / LMG 568 / P 25).